The sequence spans 461 residues: Transcriptional activator RocR (461 aa).

Asp-57 is modified (4-aspartylphosphate). One can recognise a Sigma-54 factor interaction domain in the interval 143 to 372 (ILGTSPAIQD…EHMIEGAMNF (230 aa)). Residues 171 to 178 (GETGTGKE) and 233 to 242 (AHGGTLLLDE) contribute to the ATP site. Residues 434 to 453 (ISKAAQELGISRQSLQYRLK) constitute a DNA-binding region (H-T-H motif).

Functionally, positive regulator of arginine catabolism. Controls the transcription of the two operons rocABC and rocDEF and probably acts by binding to the corresponding upstream activating sequences. This chain is Transcriptional activator RocR (rocR), found in Bacillus subtilis (strain 168).